The primary structure comprises 291 residues: Cell division protein ZipA (291 aa).

The Periplasmic segment spans residues 1–5 (MQELR). The helical transmembrane segment at 6–26 (FVLIIVGALAIAALLFHGLWT) threads the bilayer. Residues 27 to 291 (SKKEGKSKFG…QEFKVRAAQA (265 aa)) are Cytoplasmic-facing. The segment covering 29–51 (KEGKSKFGDKPLRKMKVESDDPP) has biased composition (basic and acidic residues). 2 disordered regions span residues 29 to 61 (KEGKSKFGDKPLRKMKVESDDPPSRAFAAEDDF) and 92 to 119 (ELDEEEDEEARIPVQPQSQPQPRKVQPQ).

This sequence belongs to the ZipA family. Interacts with FtsZ via their C-terminal domains.

It is found in the cell inner membrane. Its function is as follows. Essential cell division protein that stabilizes the FtsZ protofilaments by cross-linking them and that serves as a cytoplasmic membrane anchor for the Z ring. Also required for the recruitment to the septal ring of downstream cell division proteins. This chain is Cell division protein ZipA, found in Vibrio cholerae serotype O1 (strain ATCC 39541 / Classical Ogawa 395 / O395).